Here is a 539-residue protein sequence, read N- to C-terminus: Chaperonin GroEL 2 (539 aa).

Residues 29–32 (TIGP), 86–90 (DGTTT), G414, 479–481 (DAL), and D495 each bind ATP.

This sequence belongs to the chaperonin (HSP60) family. As to quaternary structure, forms a cylinder of 14 subunits composed of two heptameric rings stacked back-to-back. Interacts with the co-chaperonin GroES.

The protein localises to the cytoplasm. The enzyme catalyses ATP + H2O + a folded polypeptide = ADP + phosphate + an unfolded polypeptide.. Functionally, together with its co-chaperonin GroES, plays an essential role in assisting protein folding. The GroEL-GroES system forms a nano-cage that allows encapsulation of the non-native substrate proteins and provides a physical environment optimized to promote and accelerate protein folding. The chain is Chaperonin GroEL 2 from Synechococcus sp. (strain JA-2-3B'a(2-13)) (Cyanobacteria bacterium Yellowstone B-Prime).